Here is a 954-residue protein sequence, read N- to C-terminus: Glycine dehydrogenase (decarboxylating) (954 aa).

Position 704 is an N6-(pyridoxal phosphate)lysine (lysine 704).

The protein belongs to the GcvP family. As to quaternary structure, the glycine cleavage system is composed of four proteins: P, T, L and H. Requires pyridoxal 5'-phosphate as cofactor.

The catalysed reaction is N(6)-[(R)-lipoyl]-L-lysyl-[glycine-cleavage complex H protein] + glycine + H(+) = N(6)-[(R)-S(8)-aminomethyldihydrolipoyl]-L-lysyl-[glycine-cleavage complex H protein] + CO2. In terms of biological role, the glycine cleavage system catalyzes the degradation of glycine. The P protein binds the alpha-amino group of glycine through its pyridoxal phosphate cofactor; CO(2) is released and the remaining methylamine moiety is then transferred to the lipoamide cofactor of the H protein. This chain is Glycine dehydrogenase (decarboxylating), found in Sinorhizobium medicae (strain WSM419) (Ensifer medicae).